A 347-amino-acid polypeptide reads, in one-letter code: UDP-3-O-acylglucosamine N-acyltransferase 1 (347 aa).

Histidine 246 serves as the catalytic Proton acceptor.

This sequence belongs to the transferase hexapeptide repeat family. LpxD subfamily. In terms of assembly, homotrimer.

The enzyme catalyses a UDP-3-O-[(3R)-3-hydroxyacyl]-alpha-D-glucosamine + a (3R)-hydroxyacyl-[ACP] = a UDP-2-N,3-O-bis[(3R)-3-hydroxyacyl]-alpha-D-glucosamine + holo-[ACP] + H(+). It functions in the pathway bacterial outer membrane biogenesis; LPS lipid A biosynthesis. Its function is as follows. Catalyzes the N-acylation of UDP-3-O-acylglucosamine using 3-hydroxyacyl-ACP as the acyl donor. Is involved in the biosynthesis of lipid A, a phosphorylated glycolipid that anchors the lipopolysaccharide to the outer membrane of the cell. The chain is UDP-3-O-acylglucosamine N-acyltransferase 1 from Francisella tularensis subsp. holarctica (strain LVS).